Consider the following 161-residue polypeptide: Nucleotide-binding protein Csal_2524 (161 aa).

Belongs to the YajQ family.

Its function is as follows. Nucleotide-binding protein. In Chromohalobacter salexigens (strain ATCC BAA-138 / DSM 3043 / CIP 106854 / NCIMB 13768 / 1H11), this protein is Nucleotide-binding protein Csal_2524.